We begin with the raw amino-acid sequence, 477 residues long: Glutamate--tRNA ligase 2 (477 aa).

The 'HIGH' region motif lies at Pro12–Asn22. Residues Cys109, Cys111, Cys136, and His138 each coordinate Zn(2+). Residues Pro253 to Arg257 carry the 'KMSKS' region motif. Lys256 contacts ATP.

This sequence belongs to the class-I aminoacyl-tRNA synthetase family. Glutamate--tRNA ligase type 1 subfamily. Monomer. The cofactor is Zn(2+).

Its subcellular location is the cytoplasm. It carries out the reaction tRNA(Glu) + L-glutamate + ATP = L-glutamyl-tRNA(Glu) + AMP + diphosphate. In terms of biological role, catalyzes the attachment of glutamate to tRNA(Glu) in a two-step reaction: glutamate is first activated by ATP to form Glu-AMP and then transferred to the acceptor end of tRNA(Glu). The chain is Glutamate--tRNA ligase 2 from Alkalilimnicola ehrlichii (strain ATCC BAA-1101 / DSM 17681 / MLHE-1).